The sequence spans 623 residues: Riboflavin biosynthesis protein PYRR, chloroplastic (623 aa).

The transit peptide at 1–45 (MPLPQPLLGGASPAPARAASSFLHPLLHTRHRVSTAPAAASSFVP) directs the protein to the chloroplast. In terms of domain architecture, CMP/dCMP-type deaminase spans 52–181 (ANDAMLLRRA…ALRNEGIQVD (130 aa)).

The protein in the C-terminal section; belongs to the YbiA family.

The protein resides in the plastid. Its subcellular location is the chloroplast. The catalysed reaction is 5-amino-6-(5-phospho-D-ribitylamino)uracil + NADP(+) = 5-amino-6-(5-phospho-D-ribosylamino)uracil + NADPH + H(+). The enzyme catalyses 2,5-diamino-6-hydroxy-4-(5-phosphoribosylamino)-pyrimidine + H2O = 2,5,6-triamino-4-hydroxypyrimidine + D-ribose 5-phosphate. It catalyses the reaction 5-amino-6-(5-phospho-D-ribosylamino)uracil + H2O = 5,6-diaminouracil + D-ribose 5-phosphate. The protein operates within cofactor biosynthesis; riboflavin biosynthesis; 5-amino-6-(D-ribitylamino)uracil from GTP: step 3/4. Functionally, pyrimidine reductase involved in the riboflavin biosynthesis pathway. Also has a non-functional N-terminal deaminase domain that lacks the catalytically essential zinc-binding residues. 39% activity when NADH replaces NADPH. No evidence for a phosphatase activity conferred by the N-terminal domain. Catalyzes the hydrolysis of the N-glycosidic bond in the first two intermediates of riboflavin biosynthesis, which are highly reactive metabolites, yielding relatively innocuous products. Thus, can divert a surplus of harmful intermediates into relatively harmless products and pre-empt the damage these intermediates would otherwise do. Has no activity against GTP, nucleoside monophosphates or ADP-ribose. The protein is Riboflavin biosynthesis protein PYRR, chloroplastic (PYRR) of Zea mays (Maize).